The sequence spans 228 residues: ATP synthase subunit beta, mitochondrial (228 aa).

The transit peptide at 1 to 31 (MFALRAAAKADKNLLPFLGQLSRSHAAKAAK) directs the protein to the mitochondrion. An ATP-binding site is contributed by 183–190 (GGAGVGKT).

Belongs to the ATPase alpha/beta chains family. As to quaternary structure, F-type ATPases have 2 components, CF(1) - the catalytic core - and CF(0) - the membrane proton channel. CF(1) has five subunits: alpha(3), beta(3), gamma(1), delta(1), epsilon(1). CF(0) has three main subunits: a, b and c.

It localises to the mitochondrion. It is found in the mitochondrion inner membrane. It catalyses the reaction ATP + H2O + 4 H(+)(in) = ADP + phosphate + 5 H(+)(out). Functionally, mitochondrial membrane ATP synthase (F(1)F(0) ATP synthase or Complex V) produces ATP from ADP in the presence of a proton gradient across the membrane which is generated by electron transport complexes of the respiratory chain. F-type ATPases consist of two structural domains, F(1) - containing the extramembraneous catalytic core, and F(0) - containing the membrane proton channel, linked together by a central stalk and a peripheral stalk. During catalysis, ATP synthesis in the catalytic domain of F(1) is coupled via a rotary mechanism of the central stalk subunits to proton translocation. Subunits alpha and beta form the catalytic core in F(1). Rotation of the central stalk against the surrounding alpha(3)beta(3) subunits leads to hydrolysis of ATP in three separate catalytic sites on the beta subunits. The protein is ATP synthase subunit beta, mitochondrial of Drosophila virilis (Fruit fly).